The chain runs to 235 residues: Aspartate/glutamate leucyltransferase (235 aa).

The protein belongs to the R-transferase family. Bpt subfamily.

The protein resides in the cytoplasm. The enzyme catalyses N-terminal L-glutamyl-[protein] + L-leucyl-tRNA(Leu) = N-terminal L-leucyl-L-glutamyl-[protein] + tRNA(Leu) + H(+). It carries out the reaction N-terminal L-aspartyl-[protein] + L-leucyl-tRNA(Leu) = N-terminal L-leucyl-L-aspartyl-[protein] + tRNA(Leu) + H(+). Functionally, functions in the N-end rule pathway of protein degradation where it conjugates Leu from its aminoacyl-tRNA to the N-termini of proteins containing an N-terminal aspartate or glutamate. This is Aspartate/glutamate leucyltransferase from Pseudomonas putida (strain ATCC 47054 / DSM 6125 / CFBP 8728 / NCIMB 11950 / KT2440).